Here is a 252-residue protein sequence, read N- to C-terminus: tRNA (guanine-N(1)-)-methyltransferase (252 aa).

S-adenosyl-L-methionine-binding positions include G113 and 133-138; that span reads LGDYVL.

Belongs to the RNA methyltransferase TrmD family. Homodimer.

It is found in the cytoplasm. It catalyses the reaction guanosine(37) in tRNA + S-adenosyl-L-methionine = N(1)-methylguanosine(37) in tRNA + S-adenosyl-L-homocysteine + H(+). Its function is as follows. Specifically methylates guanosine-37 in various tRNAs. This Stenotrophomonas maltophilia (strain R551-3) protein is tRNA (guanine-N(1)-)-methyltransferase.